A 467-amino-acid chain; its full sequence is Phytase A (467 aa).

A signal peptide spans M1–P23. N27 is a glycosylation site (N-linked (GlcNAc...) asparagine). C31 and C40 are oxidised to a cystine. Residues Q50 and Y51 each contribute to the 1D-myo-inositol hexakisphosphate site. Residue N59 is glycosylated (N-linked (GlcNAc...) asparagine). 4 disulfide bridges follow: C71/C414, C215/C465, C264/C282, and C436/C444. Residues R81, H82, R85, and T88 each coordinate 1D-myo-inositol hexakisphosphate. H82 serves as the catalytic Nucleophile. N-linked (GlcNAc...) asparagine glycosylation is found at N105 and N120. Residue R165 participates in 1D-myo-inositol hexakisphosphate binding. 2 N-linked (GlcNAc...) asparagine glycosylation sites follow: N207 and N230. K301 contacts 1D-myo-inositol hexakisphosphate. 2 N-linked (GlcNAc...) asparagine glycosylation sites follow: N339 and N352. 1D-myo-inositol hexakisphosphate is bound by residues H361 and D362. N376 and N388 each carry an N-linked (GlcNAc...) asparagine glycan.

This sequence belongs to the histidine acid phosphatase family. Monomer.

Its subcellular location is the secreted. It catalyses the reaction 1D-myo-inositol hexakisphosphate + H2O = 1D-myo-inositol 1,2,4,5,6-pentakisphosphate + phosphate. It carries out the reaction 1D-myo-inositol 1,2,4,5,6-pentakisphosphate + H2O = 1D-myo-inositol 1,2,5,6-tetrakisphosphate + phosphate. The enzyme catalyses 1D-myo-inositol 1,2,5,6-tetrakisphosphate + H2O = 1D-myo-inositol 1,2,6-trisphosphate + phosphate. The catalysed reaction is 1D-myo-inositol 1,2,6-trisphosphate + H2O = 1D-myo-inositol 1,2-bisphosphate + phosphate. It catalyses the reaction 1D-myo-inositol 1,2-bisphosphate + H2O = 1D-myo-inositol 2-phosphate + phosphate. Its function is as follows. Catalyzes the phosphate monoester hydrolysis of phytic acid (myo-inositol hexakisphosphate), which results in the stepwise formation of myo-inositol pentakis-, tetrakis-, tris-, bis-, and monophosphates, as well as the liberation of inorganic phosphate. Myo-inositol 2-monophosphate is the end product. The sequence is that of Phytase A (phyA) from Aspergillus awamori (Black koji mold).